Reading from the N-terminus, the 178-residue chain is Protein GrpE (178 aa).

Residues 1–11 (MSENQNPPPSP) show a composition bias toward pro residues. The disordered stretch occupies residues 1-23 (MSENQNPPPSPEEIEAAMSANAA).

Belongs to the GrpE family. Homodimer.

Its subcellular location is the cytoplasm. Its function is as follows. Participates actively in the response to hyperosmotic and heat shock by preventing the aggregation of stress-denatured proteins, in association with DnaK and GrpE. It is the nucleotide exchange factor for DnaK and may function as a thermosensor. Unfolded proteins bind initially to DnaJ; upon interaction with the DnaJ-bound protein, DnaK hydrolyzes its bound ATP, resulting in the formation of a stable complex. GrpE releases ADP from DnaK; ATP binding to DnaK triggers the release of the substrate protein, thus completing the reaction cycle. Several rounds of ATP-dependent interactions between DnaJ, DnaK and GrpE are required for fully efficient folding. The protein is Protein GrpE of Acidovorax sp. (strain JS42).